Consider the following 145-residue polypeptide: MKRVVAAGTFDILHPGHYEFLKFAKSLGDELIVIVARDKTVEKIKGRKPIIPEEQRRAMVEALKPVDKAILGSLNNKLEPIIELKPDIIVLGPDQRTFDEEELKRELKKYDLSPKIVRFNKYIKCPFHSSYDIVKEILKRYGGKE.

ATP contacts are provided by residues 9–10 (TF), 14–17 (HPGH), D94, and Y122.

It belongs to the archaeal FAD synthase family. In terms of assembly, homodimer. It depends on a divalent metal cation as a cofactor.

It carries out the reaction FMN + ATP + H(+) = FAD + diphosphate. It participates in cofactor biosynthesis; FAD biosynthesis; FAD from FMN: step 1/1. Catalyzes the transfer of the AMP portion of ATP to flavin mononucleotide (FMN) to produce flavin adenine dinucleotide (FAD) coenzyme. In Methanocaldococcus infernus (strain DSM 11812 / JCM 15783 / ME), this protein is FAD synthase.